A 1032-amino-acid chain; its full sequence is Exportin-T (1032 aa).

Belongs to the exportin family.

Its subcellular location is the nucleus. The protein resides in the cytoplasm. In terms of biological role, tRNA nucleus export receptor which facilitates tRNA translocation across the nuclear pore complex. Involved in pre-tRNA splicing, probably by affecting the interaction of pre-tRNA with splicing endonuclease. This Aspergillus fumigatus (strain ATCC MYA-4609 / CBS 101355 / FGSC A1100 / Af293) (Neosartorya fumigata) protein is Exportin-T (los1).